The following is an 833-amino-acid chain: Glycerol-3-phosphate acyltransferase (833 aa).

Residues 310–315 carry the HXXXXD motif motif; that stretch reads HRSHID.

This sequence belongs to the GPAT/DAPAT family.

The protein localises to the cell inner membrane. The enzyme catalyses sn-glycerol 3-phosphate + an acyl-CoA = a 1-acyl-sn-glycero-3-phosphate + CoA. The protein operates within phospholipid metabolism; CDP-diacylglycerol biosynthesis; CDP-diacylglycerol from sn-glycerol 3-phosphate: step 1/3. The protein is Glycerol-3-phosphate acyltransferase of Pseudomonas syringae pv. tomato (strain ATCC BAA-871 / DC3000).